A 216-amino-acid polypeptide reads, in one-letter code: MDSAWTALDMETQTMLKTAIKDPKTVDLEKLSNAVVEHSLKDLSFCKDAGRMCYAVVQAEAQKTASSVFRRNLLNRLQQEFIAREETRKRSMQEWVCVVTFICSIFDYIKVNNSPIAALVDPVYDCLFGLAQPDSLMNEEEVDCLVVQLHRVGEQLEQTNSERMNQLFYLLRDGFLLQEDLSSMTRLLLLEILEFRASGWTLSETAHKYYYSEVAD.

Residues 2 to 199 enclose the MIF4G domain; sequence DSAWTALDME…LEILEFRASG (198 aa).

The protein belongs to the MIF4GD family. As to quaternary structure, interacts with eif4g1, eif4g2 and slbp; probably tethered by SLBP to the 3'-end of mRNAs ending with the histone stem-loop, it also interacts with eif4g1 which is bound to their 5'-end.

It is found in the cytoplasm. The protein resides in the nucleus. Functionally, functions in replication-dependent translation of histone mRNAs which differ from other eukaryotic mRNAs in that they do not end with a poly-A tail but a stem-loop. May participate in circularizing those mRNAs specifically enhancing their translation. In Danio rerio (Zebrafish), this protein is MIF4G domain-containing protein A (mif4gda).